Consider the following 156-residue polypeptide: ATP synthase subunit b (156 aa).

A helical membrane pass occupies residues 12–32; sequence VAFLIFVLFCMKFIWPPVIAA.

The protein belongs to the ATPase B chain family. In terms of assembly, F-type ATPases have 2 components, F(1) - the catalytic core - and F(0) - the membrane proton channel. F(1) has five subunits: alpha(3), beta(3), gamma(1), delta(1), epsilon(1). F(0) has three main subunits: a(1), b(2) and c(10-14). The alpha and beta chains form an alternating ring which encloses part of the gamma chain. F(1) is attached to F(0) by a central stalk formed by the gamma and epsilon chains, while a peripheral stalk is formed by the delta and b chains.

It is found in the cell inner membrane. In terms of biological role, f(1)F(0) ATP synthase produces ATP from ADP in the presence of a proton or sodium gradient. F-type ATPases consist of two structural domains, F(1) containing the extramembraneous catalytic core and F(0) containing the membrane proton channel, linked together by a central stalk and a peripheral stalk. During catalysis, ATP synthesis in the catalytic domain of F(1) is coupled via a rotary mechanism of the central stalk subunits to proton translocation. Component of the F(0) channel, it forms part of the peripheral stalk, linking F(1) to F(0). The polypeptide is ATP synthase subunit b (Pseudomonas fluorescens (strain ATCC BAA-477 / NRRL B-23932 / Pf-5)).